Consider the following 379-residue polypeptide: Putative thylakoid lumen peptidyl-prolyl cis-trans isomerase sll0408 (379 aa).

Residues M1–A33 form the signal peptide. The PPIase cyclophilin-type domain maps to G190–N378.

The protein resides in the cellular thylakoid lumen. It carries out the reaction [protein]-peptidylproline (omega=180) = [protein]-peptidylproline (omega=0). Its function is as follows. PPIases accelerate the folding of proteins. It catalyzes the cis-trans isomerization of proline imidic peptide bonds in oligopeptides. Required for the assembly and stabilization of PSII. This is Putative thylakoid lumen peptidyl-prolyl cis-trans isomerase sll0408 from Synechocystis sp. (strain ATCC 27184 / PCC 6803 / Kazusa).